The primary structure comprises 333 residues: Probable HTH-type transcriptional repressor ExuR (333 aa).

In terms of domain architecture, HTH lacI-type spans 2 to 56; it reads VTIKDIAKLANVSHTTVSRALNNSPYIKEHTKKKILELAEQLNYTPNVNAKSLAM. Residues 4–23 constitute a DNA-binding region (H-T-H motif); the sequence is IKDIAKLANVSHTTVSRALN.

Functionally, transcriptional repressor for the exu locus which is required for galacturonate utilization. This Bacillus subtilis (strain 168) protein is Probable HTH-type transcriptional repressor ExuR (exuR).